A 141-amino-acid chain; its full sequence is Lutropin subunit beta (141 aa).

Positions 1–18 (MGTLQGLLLWLLLGTGGA) are cleaved as a signal peptide. 6 cysteine pairs are disulfide-bonded: cysteine 29–cysteine 77, cysteine 43–cysteine 92, cysteine 46–cysteine 130, cysteine 54–cysteine 108, cysteine 58–cysteine 110, and cysteine 113–cysteine 120. An N-linked (GlcNAc...) asparagine glycan is attached at asparagine 33.

The protein belongs to the glycoprotein hormones subunit beta family. As to quaternary structure, heterodimer of a common alpha chain and a unique beta chain which confers biological specificity to thyrotropin, lutropin, follitropin and gonadotropin.

It localises to the secreted. Functionally, promotes spermatogenesis and ovulation by stimulating the testes and ovaries to synthesize steroids. This chain is Lutropin subunit beta (LHB), found in Oryctolagus cuniculus (Rabbit).